We begin with the raw amino-acid sequence, 390 residues long: tRNA(Met) cytidine acetate ligase (390 aa).

Residues valine 7 to histidine 20, glycine 101, asparagine 162, and arginine 187 each bind ATP.

This sequence belongs to the TmcAL family.

Its subcellular location is the cytoplasm. The catalysed reaction is cytidine(34) in elongator tRNA(Met) + acetate + ATP = N(4)-acetylcytidine(34) in elongator tRNA(Met) + AMP + diphosphate. Functionally, catalyzes the formation of N(4)-acetylcytidine (ac(4)C) at the wobble position of elongator tRNA(Met), using acetate and ATP as substrates. First activates an acetate ion to form acetyladenylate (Ac-AMP) and then transfers the acetyl group to tRNA to form ac(4)C34. The polypeptide is tRNA(Met) cytidine acetate ligase (Listeria monocytogenes serovar 1/2a (strain ATCC BAA-679 / EGD-e)).